The sequence spans 393 residues: Chorismate synthase (393 aa).

NADP(+) contacts are provided by R40 and R46. FMN is bound by residues 129–131 (RAS), 251–252 (QA), G301, 316–320 (KPIST), and R342.

It belongs to the chorismate synthase family. Homotetramer. The cofactor is FMNH2.

It carries out the reaction 5-O-(1-carboxyvinyl)-3-phosphoshikimate = chorismate + phosphate. The protein operates within metabolic intermediate biosynthesis; chorismate biosynthesis; chorismate from D-erythrose 4-phosphate and phosphoenolpyruvate: step 7/7. Catalyzes the anti-1,4-elimination of the C-3 phosphate and the C-6 proR hydrogen from 5-enolpyruvylshikimate-3-phosphate (EPSP) to yield chorismate, which is the branch point compound that serves as the starting substrate for the three terminal pathways of aromatic amino acid biosynthesis. This reaction introduces a second double bond into the aromatic ring system. This chain is Chorismate synthase, found in Koribacter versatilis (strain Ellin345).